A 288-amino-acid chain; its full sequence is Octanoyl-[GcvH]:protein N-octanoyltransferase (288 aa).

A BPL/LPL catalytic domain is found at 44 to 253 (AGGPPTFRLW…VLESAMGPQV (210 aa)). The active-site Acyl-thioester intermediate is the C148. The interval 269 to 288 (GREGASETDPRRVAYGVDRP) is disordered. Residues 272–288 (GASETDPRRVAYGVDRP) are compositionally biased toward basic and acidic residues.

The protein belongs to the octanoyltransferase LipL family.

It carries out the reaction N(6)-octanoyl-L-lysyl-[glycine-cleavage complex H protein] + L-lysyl-[lipoyl-carrier protein] = N(6)-octanoyl-L-lysyl-[lipoyl-carrier protein] + L-lysyl-[glycine-cleavage complex H protein]. It participates in protein modification; protein lipoylation via endogenous pathway; protein N(6)-(lipoyl)lysine from octanoyl-[acyl-carrier-protein]. In terms of biological role, catalyzes the amidotransfer (transamidation) of the octanoyl moiety from octanoyl-GcvH to the lipoyl domain of the E2 subunit of lipoate-dependent enzymes. This Kyrpidia tusciae (strain DSM 2912 / NBRC 15312 / T2) (Bacillus tusciae) protein is Octanoyl-[GcvH]:protein N-octanoyltransferase.